Here is a 360-residue protein sequence, read N- to C-terminus: Probable dual-specificity RNA methyltransferase RlmN (360 aa).

Residue glutamate 91 is the Proton acceptor of the active site. One can recognise a Radical SAM core domain in the interval 97 to 335 (QHYGQSVCVT…CVVRQEHGTD (239 aa)). The cysteines at positions 104 and 340 are disulfide-linked. Residues cysteine 111, cysteine 115, and cysteine 118 each coordinate [4Fe-4S] cluster. S-adenosyl-L-methionine contacts are provided by residues 163 to 164 (GE), serine 195, 218 to 220 (SLH), and asparagine 296. Cysteine 340 acts as the S-methylcysteine intermediate in catalysis.

The protein belongs to the radical SAM superfamily. RlmN family. It depends on [4Fe-4S] cluster as a cofactor.

It localises to the cytoplasm. The catalysed reaction is adenosine(2503) in 23S rRNA + 2 reduced [2Fe-2S]-[ferredoxin] + 2 S-adenosyl-L-methionine = 2-methyladenosine(2503) in 23S rRNA + 5'-deoxyadenosine + L-methionine + 2 oxidized [2Fe-2S]-[ferredoxin] + S-adenosyl-L-homocysteine. It carries out the reaction adenosine(37) in tRNA + 2 reduced [2Fe-2S]-[ferredoxin] + 2 S-adenosyl-L-methionine = 2-methyladenosine(37) in tRNA + 5'-deoxyadenosine + L-methionine + 2 oxidized [2Fe-2S]-[ferredoxin] + S-adenosyl-L-homocysteine. Functionally, specifically methylates position 2 of adenine 2503 in 23S rRNA and position 2 of adenine 37 in tRNAs. The polypeptide is Probable dual-specificity RNA methyltransferase RlmN (Streptococcus equi subsp. zooepidemicus (strain MGCS10565)).